Consider the following 160-residue polypeptide: Phosphopantetheine adenylyltransferase (160 aa).

Substrate is bound at residue Ser-9. ATP-binding positions include 9–10 (SF) and His-17. Residues Lys-41, Ile-73, and Lys-87 each contribute to the substrate site. Residues 88–90 (GLR), Glu-98, and 122–128 (YSFVSSS) each bind ATP.

The protein belongs to the bacterial CoaD family. As to quaternary structure, homohexamer. The cofactor is Mg(2+).

The protein resides in the cytoplasm. It catalyses the reaction (R)-4'-phosphopantetheine + ATP + H(+) = 3'-dephospho-CoA + diphosphate. The protein operates within cofactor biosynthesis; coenzyme A biosynthesis; CoA from (R)-pantothenate: step 4/5. Functionally, reversibly transfers an adenylyl group from ATP to 4'-phosphopantetheine, yielding dephospho-CoA (dPCoA) and pyrophosphate. This is Phosphopantetheine adenylyltransferase from Mycolicibacterium gilvum (strain PYR-GCK) (Mycobacterium gilvum (strain PYR-GCK)).